Reading from the N-terminus, the 94-residue chain is Co-chaperonin GroES (94 aa).

The protein belongs to the GroES chaperonin family. As to quaternary structure, heptamer of 7 subunits arranged in a ring. Interacts with the chaperonin GroEL.

Its subcellular location is the cytoplasm. In terms of biological role, together with the chaperonin GroEL, plays an essential role in assisting protein folding. The GroEL-GroES system forms a nano-cage that allows encapsulation of the non-native substrate proteins and provides a physical environment optimized to promote and accelerate protein folding. GroES binds to the apical surface of the GroEL ring, thereby capping the opening of the GroEL channel. The polypeptide is Co-chaperonin GroES (Streptococcus pneumoniae (strain CGSP14)).